The chain runs to 334 residues: N-acetyl-gamma-glutamyl-phosphate reductase (334 aa).

C145 is a catalytic residue. The segment at 173-192 (GISGSGQDPTEGTHYPNVTQ) is disordered.

It belongs to the NAGSA dehydrogenase family. Type 1 subfamily.

Its subcellular location is the cytoplasm. The enzyme catalyses N-acetyl-L-glutamate 5-semialdehyde + phosphate + NADP(+) = N-acetyl-L-glutamyl 5-phosphate + NADPH + H(+). Its pathway is amino-acid biosynthesis; L-arginine biosynthesis; N(2)-acetyl-L-ornithine from L-glutamate: step 3/4. Catalyzes the NADPH-dependent reduction of N-acetyl-5-glutamyl phosphate to yield N-acetyl-L-glutamate 5-semialdehyde. In Methanocella arvoryzae (strain DSM 22066 / NBRC 105507 / MRE50), this protein is N-acetyl-gamma-glutamyl-phosphate reductase.